The following is a 245-amino-acid chain: tRNA pseudouridine synthase A (245 aa).

The active-site Nucleophile is D52. Y111 is a substrate binding site.

It belongs to the tRNA pseudouridine synthase TruA family. In terms of assembly, homodimer.

The catalysed reaction is uridine(38/39/40) in tRNA = pseudouridine(38/39/40) in tRNA. Its function is as follows. Formation of pseudouridine at positions 38, 39 and 40 in the anticodon stem and loop of transfer RNAs. This is tRNA pseudouridine synthase A from Rickettsia felis (strain ATCC VR-1525 / URRWXCal2) (Rickettsia azadi).